The sequence spans 442 residues: PTS system oligo-beta-mannoside-specific EIIC component (442 aa).

Positions 5 to 411 (ISQFLVPIAG…LIVFVIWFPF (407 aa)) constitute a PTS EIIC type-3 domain. 11 helical membrane-spanning segments follow: residues 28 to 48 (AFML…LTNL), 67 to 87 (FGIA…FGIG), 97 to 117 (EAVF…PFII), 138 to 157 (GMFL…RRIV), 177 to 197 (FAAL…NVMV), 205 to 225 (MHDV…SGII), 228 to 248 (LIAV…QIII), 286 to 306 (TVGM…LIFM), 329 to 349 (PIIF…WVLA), 365 to 385 (LVPP…INGI), and 391 to 411 (IMGG…WFPF).

Its subcellular location is the cell membrane. Functionally, the phosphoenolpyruvate-dependent sugar phosphotransferase system (sugar PTS), a major carbohydrate active transport system, catalyzes the phosphorylation of incoming sugar substrates concomitantly with their translocation across the cell membrane. The enzyme II GmuABC PTS system is involved in the transport of oligo-glucomannans such as cellobiose or mannobiose. The protein is PTS system oligo-beta-mannoside-specific EIIC component of Bacillus subtilis (strain 168).